We begin with the raw amino-acid sequence, 504 residues long: Anaerobic nitric oxide reductase transcription regulator NorR (504 aa).

Residue Asp57 is modified to 4-aspartylphosphate. Positions 187–416 (MIGLSPGMTQ…LEHAIHRAVV (230 aa)) constitute a Sigma-54 factor interaction domain. Residues 215–222 (GETGTGKE) and 278–287 (ADNGTLFLDE) each bind ATP. Residues 479-498 (WAACARMLETDVANLHRLAK) constitute a DNA-binding region (H-T-H motif).

It functions in the pathway nitrogen metabolism; nitric oxide reduction. Functionally, required for the expression of anaerobic nitric oxide (NO) reductase, acts as a transcriptional activator for at least the norVW operon. Activation also requires sigma-54. This is Anaerobic nitric oxide reductase transcription regulator NorR from Escherichia coli O6:H1 (strain CFT073 / ATCC 700928 / UPEC).